Consider the following 313-residue polypeptide: Porphobilinogen deaminase (313 aa).

At Cys242 the chain carries S-(dipyrrolylmethanemethyl)cysteine.

Belongs to the HMBS family. Monomer. Dipyrromethane is required as a cofactor.

It catalyses the reaction 4 porphobilinogen + H2O = hydroxymethylbilane + 4 NH4(+). The protein operates within porphyrin-containing compound metabolism; protoporphyrin-IX biosynthesis; coproporphyrinogen-III from 5-aminolevulinate: step 2/4. Its function is as follows. Tetrapolymerization of the monopyrrole PBG into the hydroxymethylbilane pre-uroporphyrinogen in several discrete steps. The chain is Porphobilinogen deaminase from Escherichia coli (strain K12 / MC4100 / BW2952).